A 258-amino-acid polypeptide reads, in one-letter code: uncharacterized protein (258 aa).

Solcar repeat units lie at residues 9 to 78 (KPIL…AKAR), 81 to 160 (PGVR…FKKK), and 165 to 246 (DHVF…VKSH). The next 6 helical transmembrane spans lie at 11–31 (ILVGGLSGLVAETLVFPLSTI), 53–73 (GLSSVLVSTLPSASSFFFVYE), 87–107 (LVSASVAEVVSCGILAPAEVV), 139–159 (MCGRNVPATAFQFVLYEQFKK), 171–191 (PKGAALSGAITAAVLTPLDVI), and 218–239 (FEKGLGLRVFASSLGLSIYLGT).

The protein belongs to the mitochondrial carrier (TC 2.A.29) family.

The protein localises to the mitochondrion inner membrane. This is an uncharacterized protein from Schizosaccharomyces pombe (strain 972 / ATCC 24843) (Fission yeast).